We begin with the raw amino-acid sequence, 194 residues long: Ribonuclease HII (194 aa).

One can recognise an RNase H type-2 domain in the interval Met1–Arg194. Asp6, Glu7, and Asp102 together coordinate a divalent metal cation.

Belongs to the RNase HII family. Mn(2+) is required as a cofactor. Requires Mg(2+) as cofactor.

The protein resides in the cytoplasm. It catalyses the reaction Endonucleolytic cleavage to 5'-phosphomonoester.. In terms of biological role, endonuclease that specifically degrades the RNA of RNA-DNA hybrids. The sequence is that of Ribonuclease HII from Synechococcus sp. (strain WH7803).